The chain runs to 561 residues: Sesquiterpene synthase 2 (561 aa).

Mg(2+)-binding residues include aspartate 313, aspartate 317, aspartate 458, and glutamate 466. The DDXXD motif signature appears at 313 to 317 (DDIYD).

Belongs to the terpene synthase family. Tpsa subfamily. Requires Mn(2+) as cofactor. Mg(2+) serves as cofactor.

Its subcellular location is the cytoplasm. The catalysed reaction is (2E,6E)-farnesyl diphosphate + H2O = kunzeaol + diphosphate. The protein operates within secondary metabolite biosynthesis; terpenoid biosynthesis. Involved in the biosynthesis of kunzeaol. Produces mainly (-)-germacrene D along with gamma-cadinene. This is Sesquiterpene synthase 2 (STS2) from Thapsia garganica (Deadly carrot).